The chain runs to 222 residues: Neurotrophic factor BDNF precursor form (222 aa).

The first 4 residues, 1–4 (CMKA), serve as a signal peptide directing secretion. The propeptide occupies 5–113 (APMKEVSVRG…AANMSMRVRR (109 aa)). N-linked (GlcNAc...) asparagine glycosylation is present at Asn106. Disulfide bonds link Cys126/Cys193 and Cys171/Cys222.

It belongs to the NGF-beta family.

It localises to the secreted. Its function is as follows. Promotes the survival of neuronal populations that are all located either in the central nervous system or directly connected to it. This Xenopeltis unicolor (Sunbeam snake) protein is Neurotrophic factor BDNF precursor form (BDNF).